A 508-amino-acid chain; its full sequence is Glycerol kinase (508 aa).

T17 contacts ADP. Residues T17, T18, and S19 each contribute to the ATP site. T17 is a binding site for sn-glycerol 3-phosphate. An ADP-binding site is contributed by R21. The sn-glycerol 3-phosphate site is built by R87, E88, Y139, and D256. Glycerol-binding residues include R87, E88, Y139, D256, and Q257. T278 and G322 together coordinate ADP. Residues T278, G322, Q326, and A423 each contribute to the ATP site. A423 and N427 together coordinate ADP.

This sequence belongs to the FGGY kinase family.

It carries out the reaction glycerol + ATP = sn-glycerol 3-phosphate + ADP + H(+). Its pathway is polyol metabolism; glycerol degradation via glycerol kinase pathway; sn-glycerol 3-phosphate from glycerol: step 1/1. Its activity is regulated as follows. Inhibited by fructose 1,6-bisphosphate (FBP). Its function is as follows. Key enzyme in the regulation of glycerol uptake and metabolism. Catalyzes the phosphorylation of glycerol to yield sn-glycerol 3-phosphate. This chain is Glycerol kinase, found in Corynebacterium efficiens (strain DSM 44549 / YS-314 / AJ 12310 / JCM 11189 / NBRC 100395).